The following is a 380-amino-acid chain: DNA replication and repair protein RecF (380 aa).

30 to 37 is an ATP binding site; it reads GQNGQGKT.

This sequence belongs to the RecF family.

It localises to the cytoplasm. Its function is as follows. The RecF protein is involved in DNA metabolism; it is required for DNA replication and normal SOS inducibility. RecF binds preferentially to single-stranded, linear DNA. It also seems to bind ATP. The chain is DNA replication and repair protein RecF from Myxococcus xanthus (strain DK1622).